Consider the following 391-residue polypeptide: MIPSKGKYYFTSESVTEGHPDKVADQISDAVLDVLLAQDPNSRVACETLVTTGMAVIAGEITTRGYADLPHVVRETIRNIGYNSSEMGFDWQTCAVISSIDKQSADIAQGVDRATNEDQGAGDQGMMFGFACDETATLMPAPIYWAHQLSQRLTEVRKDGTVDIFRPDGKTQVSFEYVDGKPVRINNVVVSTQHKDSASQADIIDAVKTHVIRPILEPSGFFDEKACDIFINTTGRFVIGGPMGDCGLTGRKIIQDTYGGMGHHGGGAFSGKDASKVDRSGAYMARYIAKNVVASGLAPKCEVQIAYCIGVAEPVSVLVSSQGTASVPDEVLTRAVREVFDLRPFHITRRLDLLRPIYGKTSCYGHFGRELPEFTWEHTDAAADLRTAAKV.

Residue His19 participates in ATP binding. Asp21 is a Mg(2+) binding site. Glu47 is a binding site for K(+). L-methionine-binding residues include Glu60 and Gln103. The segment at 103–113 is flexible loop; it reads QSADIAQGVDR. Residues 168–170, 236–237, Asp245, 251–252, Ala268, and Lys272 each bind ATP; these read DGK, RF, and RK. Position 245 (Asp245) interacts with L-methionine. Lys276 lines the L-methionine pocket.

This sequence belongs to the AdoMet synthase family. In terms of assembly, homotetramer; dimer of dimers. The cofactor is Mg(2+). K(+) is required as a cofactor.

Its subcellular location is the cytoplasm. The catalysed reaction is L-methionine + ATP + H2O = S-adenosyl-L-methionine + phosphate + diphosphate. Its pathway is amino-acid biosynthesis; S-adenosyl-L-methionine biosynthesis; S-adenosyl-L-methionine from L-methionine: step 1/1. Functionally, catalyzes the formation of S-adenosylmethionine (AdoMet) from methionine and ATP. The overall synthetic reaction is composed of two sequential steps, AdoMet formation and the subsequent tripolyphosphate hydrolysis which occurs prior to release of AdoMet from the enzyme. The polypeptide is S-adenosylmethionine synthase (Nitratidesulfovibrio vulgaris (strain ATCC 29579 / DSM 644 / CCUG 34227 / NCIMB 8303 / VKM B-1760 / Hildenborough) (Desulfovibrio vulgaris)).